We begin with the raw amino-acid sequence, 455 residues long: Protein king tubby (455 aa).

The disordered stretch occupies residues Arg-35 to Ser-92. A compositionally biased stretch (low complexity) spans Leu-67–Ser-92. Ser-144 is subject to Phosphoserine.

Belongs to the TUB family.

It localises to the cytoplasm. It is found in the nucleus. Its subcellular location is the cell projection. The protein resides in the cilium membrane. The protein localises to the rhabdomere. The sequence is that of Protein king tubby from Drosophila virilis (Fruit fly).